A 316-amino-acid chain; its full sequence is N-acetyl-gamma-glutamyl-phosphate reductase (316 aa).

Cys136 is an active-site residue.

It belongs to the NAGSA dehydrogenase family. Type 1 subfamily.

The protein localises to the cytoplasm. The enzyme catalyses N-acetyl-L-glutamate 5-semialdehyde + phosphate + NADP(+) = N-acetyl-L-glutamyl 5-phosphate + NADPH + H(+). The protein operates within amino-acid biosynthesis; L-arginine biosynthesis; N(2)-acetyl-L-ornithine from L-glutamate: step 3/4. Its function is as follows. Catalyzes the NADPH-dependent reduction of N-acetyl-5-glutamyl phosphate to yield N-acetyl-L-glutamate 5-semialdehyde. This is N-acetyl-gamma-glutamyl-phosphate reductase from Xanthomonas euvesicatoria pv. vesicatoria (strain 85-10) (Xanthomonas campestris pv. vesicatoria).